Consider the following 747-residue polypeptide: DNA ligase (747 aa).

NAD(+) contacts are provided by residues 33-37 (DEEYD), 83-84 (SL), and Glu-113. Lys-115 (N6-AMP-lysine intermediate) is an active-site residue. NAD(+) is bound by residues Arg-136, Glu-174, Lys-299, and Lys-323. Zn(2+) contacts are provided by Cys-417, Cys-420, Cys-436, and Cys-442. Residues 659-747 (TGGGVLSGLT…GPGALPEVAE (89 aa)) enclose the BRCT domain.

Belongs to the NAD-dependent DNA ligase family. LigA subfamily. It depends on Mg(2+) as a cofactor. Mn(2+) is required as a cofactor.

It catalyses the reaction NAD(+) + (deoxyribonucleotide)n-3'-hydroxyl + 5'-phospho-(deoxyribonucleotide)m = (deoxyribonucleotide)n+m + AMP + beta-nicotinamide D-nucleotide.. Functionally, DNA ligase that catalyzes the formation of phosphodiester linkages between 5'-phosphoryl and 3'-hydroxyl groups in double-stranded DNA using NAD as a coenzyme and as the energy source for the reaction. It is essential for DNA replication and repair of damaged DNA. The sequence is that of DNA ligase from Leifsonia xyli subsp. xyli (strain CTCB07).